Here is a 338-residue protein sequence, read N- to C-terminus: Solute carrier family 35 member G4 (338 aa).

The disordered stretch occupies residues 1 to 29; sequence MAGSHPYFNLPDSTHPSPPSTPPSLHWHQ. The next 7 membrane-spanning stretches (helical) occupy residues 37–57, 160–180, 190–210, 221–241, 250–270, 281–301, and 305–325; these read TNGL…VGPL, CGLL…LWTL, GLGY…LLVY, TVAF…LFVL, LLSW…FTCV, LVCA…YFML, and VAPS…IITA. In terms of domain architecture, EamA 1 spans 49–174; sequence LPAGFVGPLS…SILGLIIIVG (126 aa). Residues 272-325 form the EamA 2 domain; sequence YAVTKAHPALVCAVLHSEVVMALILQYFMLHETVAPSDIMGAGVVLGSIAIITA.

Belongs to the SLC35G solute transporter family.

It is found in the membrane. This Homo sapiens (Human) protein is Solute carrier family 35 member G4 (SLC35G4).